Here is a 313-residue protein sequence, read N- to C-terminus: Dehydrogenase/reductase SDR family member 1 (313 aa).

Alanine 2 carries the N-acetylalanine modification. Isoleucine 19 serves as a coordination point for NAD(+). Residue arginine 21 is modified to Omega-N-methylarginine. Aspartate 64 serves as a coordination point for NAD(+). Serine 151 contacts substrate. Tyrosine 163, lysine 167, and threonine 198 together coordinate NAD(+). Tyrosine 163 functions as the Proton acceptor in the catalytic mechanism. The tract at residues 235–313 is required for ER localization; that stretch reads CVVALATDPN…WIIALYTSKF (79 aa).

The protein belongs to the short-chain dehydrogenases/reductases (SDR) family. As to expression, detected in heart, liver, adrenal glands, and at low levels in skeletal muscle, kidney, pancreas and brain.

The protein localises to the endoplasmic reticulum. It carries out the reaction 17alpha-estradiol + NADP(+) = estrone + NADPH + H(+). The catalysed reaction is testosterone + NADP(+) = androst-4-ene-3,17-dione + NADPH + H(+). It catalyses the reaction prostaglandin E1 + NADPH + H(+) = prostaglandin F1 + NADP(+). The enzyme catalyses isatin + NADPH + H(+) = 3-hydroxyindolin-2-one + NADP(+). NADPH-dependent oxidoreductase which catalyzes the reduction of steroids (estrone, androstene-3,17-dione and cortisone) as well as prostaglandin E1, isatin and xenobiotics in vitro. May have a role in steroid and/or xenobiotic metabolism. This is Dehydrogenase/reductase SDR family member 1 from Homo sapiens (Human).